Here is a 132-residue protein sequence, read N- to C-terminus: Phosphoribosyl-AMP cyclohydrolase (132 aa).

A Mg(2+)-binding site is contributed by aspartate 78. Position 79 (cysteine 79) interacts with Zn(2+). The Mg(2+) site is built by aspartate 80 and aspartate 82. Cysteine 96 and cysteine 103 together coordinate Zn(2+).

This sequence belongs to the PRA-CH family. Homodimer. Mg(2+) serves as cofactor. Zn(2+) is required as a cofactor.

It localises to the cytoplasm. It catalyses the reaction 1-(5-phospho-beta-D-ribosyl)-5'-AMP + H2O = 1-(5-phospho-beta-D-ribosyl)-5-[(5-phospho-beta-D-ribosylamino)methylideneamino]imidazole-4-carboxamide. It functions in the pathway amino-acid biosynthesis; L-histidine biosynthesis; L-histidine from 5-phospho-alpha-D-ribose 1-diphosphate: step 3/9. Catalyzes the hydrolysis of the adenine ring of phosphoribosyl-AMP. The polypeptide is Phosphoribosyl-AMP cyclohydrolase (Nitrosococcus oceani (strain ATCC 19707 / BCRC 17464 / JCM 30415 / NCIMB 11848 / C-107)).